A 262-amino-acid chain; its full sequence is Troponin T, slow skeletal muscle (262 aa).

A compositionally biased stretch (acidic residues) spans 1 to 31 (MSDAEEQEYEEEQPEEEEAAEEEEAPEEPEP). Disordered stretches follow at residues 1-59 (MSDA…PEGE), 107-153 (RAER…KKKV), and 165-197 (LVKAEQKRGKRQTGREMKQRILSERKKPLNIDH). Phosphoserine; by CK2 is present on serine 2. The segment covering 32 to 41 (VAEREEERPK) has biased composition (basic and acidic residues). Over residues 43–55 (SRPVVPPLIPPKI) the composition is skewed to pro residues. Basic and acidic residues-rich tracts occupy residues 107-149 (RAER…DDAK) and 177-197 (TGREMKQRILSERKKPLNIDH).

Belongs to the troponin T family. As to quaternary structure, interacts with TPM3.

In terms of biological role, troponin T is the tropomyosin-binding subunit of troponin, the thin filament regulatory complex which confers calcium-sensitivity to striated muscle actomyosin ATPase activity. In Sus scrofa (Pig), this protein is Troponin T, slow skeletal muscle (TNNT1).